The primary structure comprises 119 residues: Large ribosomal subunit protein bL20c (119 aa).

The protein belongs to the bacterial ribosomal protein bL20 family.

The protein localises to the plastid. It is found in the chloroplast. Its function is as follows. Binds directly to 23S ribosomal RNA and is necessary for the in vitro assembly process of the 50S ribosomal subunit. It is not involved in the protein synthesizing functions of that subunit. In Lolium perenne (Perennial ryegrass), this protein is Large ribosomal subunit protein bL20c.